The following is a 298-amino-acid chain: Diphthine methyl ester synthase (298 aa).

S-adenosyl-L-methionine-binding positions include Leu9, Asp85, Gly88, 113–114 (SV), Leu164, Leu222, and His247.

This sequence belongs to the diphthine synthase family.

The protein resides in the cytoplasm. It carries out the reaction 2-[(3S)-amino-3-carboxypropyl]-L-histidyl-[translation elongation factor 2] + 4 S-adenosyl-L-methionine = diphthine methyl ester-[translation elongation factor 2] + 4 S-adenosyl-L-homocysteine + 3 H(+). It functions in the pathway protein modification; peptidyl-diphthamide biosynthesis. In terms of biological role, S-adenosyl-L-methionine-dependent methyltransferase that catalyzes four methylations of the modified target histidine residue in translation elongation factor 2 (EF-2), to form an intermediate called diphthine methyl ester. The four successive methylation reactions represent the second step of diphthamide biosynthesis. This is Diphthine methyl ester synthase (DPH5) from Eremothecium gossypii (strain ATCC 10895 / CBS 109.51 / FGSC 9923 / NRRL Y-1056) (Yeast).